Reading from the N-terminus, the 2087-residue chain is Rho GTPase-activating protein 32 (2087 aa).

The 115-residue stretch at Gly-131 to Gly-245 folds into the PX; atypical domain. The SH3 domain occupies Pro-259–Gln-321. The region spanning Cys-372–Phe-567 is the Rho-GAP domain. Residues Ser-706, Ser-709, Ser-732, and Ser-738 each carry the phosphoserine modification. The interval Phe-818–Leu-858 is disordered. The span at Ser-825–Glu-837 shows a compositional bias: basic and acidic residues. Residues Thr-838–Pro-854 are compositionally biased toward polar residues. Residues Ser-852, Ser-856, and Ser-892 each carry the phosphoserine modification. Positions Ser-927–Thr-938 are enriched in low complexity. Disordered stretches follow at residues Ser-927–Asn-1038, Pro-1103–His-1143, and Val-1169–Ser-1257. Ser-952 bears the Phosphoserine mark. Low complexity-rich tracts occupy residues Ser-994–Ser-1005 and Gln-1019–Leu-1029. Residues Thr-1124–Ser-1138 are compositionally biased toward polar residues. Residues Asp-1172–Phe-1182 show a composition bias toward basic and acidic residues. Polar residues predominate over residues Gly-1188–Ser-1203. A Phosphoserine modification is found at Ser-1203. The span at Asp-1222–Asp-1232 shows a compositional bias: basic and acidic residues. The segment at Arg-1391–Pro-1711 is interaction with GAB2. Asymmetric dimethylarginine occurs at positions 1523 and 1533. Position 1585 is a phosphoserine (Ser-1585). The interaction with FYN stretch occupies residues Pro-1685–Glu-2087. The interval Pro-1798–Pro-1896 is disordered. Residues Gly-1823–Arg-1838 show a composition bias toward basic and acidic residues. Positions Ser-1847–Leu-1862 are enriched in polar residues. A compositionally biased stretch (basic and acidic residues) spans Pro-1875 to Cys-1889. Position 2037 is an omega-N-methylarginine (Arg-2037).

This sequence belongs to the PX domain-containing GAP family. In terms of assembly, interacts with NTRK1 (via cytoplasmic domain); the interaction is independent of the phosphorylation state of NTRK1. Interacts with SHC3 (via SH2 domain). Interacts with RASA1 (via SH3 domain); the interaction is necessary for the Ras activation and cell transforming activities of ARHGAP32. Interacts with GAB1 and GAB2. Interacts with CRK and CRKL. Found in a complex with CRKL and BCAR1; upon EGF stimulation BCAR1 may be replaced by EGFR. Interacts with NCK1 (via SH3 domain); NCK1 recruits phosphorylated BCAR1 to the complex. Isoform 2 interacts with FYN; the interaction appears to be dependent on tyrosine phosphorylation of ARHGAP32. Interacts with EGFR; the interaction requires EGF stimulation and is increased by SHC3. Interacts with CDC42; the interaction requires constitutively active CDC42. Interacts with CTNNB1. Interacts with GRIN2B. Interacts with DLG4 and CDH2. Interacts with GPHN. In terms of processing, isoform 2 is phosphorylated on multiple tyrosine residues by FYN. Phosphorylated tyrosine residues undergo dephosphorylation after stimulation of NMDA receptors. Phosphorylated in vitro by CaMK2 in the presence of calmodulin and calcium; which inhibits GAP activity. Isoform 1 and isoform 2 are highly expressed in brain and testis. Isoform 1 is also expressed in other tissues such as lung, liver and spleen.

The protein resides in the postsynaptic density. Its subcellular location is the cell projection. It localises to the dendritic spine. It is found in the cytoplasm. The protein localises to the cell cortex. The protein resides in the endosome membrane. Its subcellular location is the golgi apparatus membrane. It localises to the endoplasmic reticulum membrane. It is found in the membrane. GTPase-activating protein (GAP) promoting GTP hydrolysis on RHOA, CDC42 and RAC1 small GTPases. May be involved in the differentiation of neuronal cells during the formation of neurite extensions. Involved in NMDA receptor activity-dependent actin reorganization in dendritic spines. May mediate cross-talks between Ras- and Rho-regulated signaling pathways in cell growth regulation. Isoform 2 has higher GAP activity. The protein is Rho GTPase-activating protein 32 (ARHGAP32) of Homo sapiens (Human).